A 613-amino-acid polypeptide reads, in one-letter code: Phostensin (613 aa).

Basic and acidic residues predominate over residues 18–33 (EEASVRGREKAERERL). Disordered regions lie at residues 18-231 (EEAS…SAYQ) and 266-500 (GEER…AVPG). S54, S125, S133, S175, and S195 each carry phosphoserine. Composition is skewed to basic and acidic residues over residues 104-154 (RSEE…ERRL) and 167-191 (LEARDWRQSPGEVGDRSSRLSEAWK). T199 carries the phosphothreonine modification. Positions 199-221 (TPERSLRLAESREQSPRRKEVES) are enriched in basic and acidic residues. A Phosphoserine modification is found at S224. Over residues 266–282 (GEERQDYSEECGRKEEW) the composition is skewed to basic and acidic residues. A compositionally biased stretch (polar residues) spans 295-309 (LSETLTREAQGNSSA). Basic and acidic residues-rich tracts occupy residues 314–327 (AEQRPVEDGERGMK), 340–350 (KAREWTPRDIE), and 357–366 (EPPESAEKLL). Phosphoserine is present on residues S368 and S432. Residues 424 to 446 (QPPPPAPLSPPPPAPTAPQPPGD) show a composition bias toward pro residues. The residue at position 457 (K457) is an N6-acetyllysine. The segment covering 476–499 (PRRSVPPATPATPTSPATVDAAVP) has biased composition (low complexity). Phosphoserine is present on residues S490 and S530. The tract at residues 552-595 (QYPSESSVLEELGPEPEVPSAPNPPAAQPDDEEDEEELLLLQPE) is disordered. Positions 567-578 (PEVPSAPNPPAA) are enriched in pro residues. Acidic residues predominate over residues 580-589 (PDDEEDEEEL).

As to quaternary structure, interacts with Protein phosphatase 1 (PP1). Isoform 4 is predominantly expressed in leukocytes and spleen.

It is found in the cytoplasm. The protein resides in the cytoskeleton. Functionally, may target protein phosphatase 1 to F-actin cytoskeleton. The chain is Phostensin (PPP1R18) from Homo sapiens (Human).